The following is a 901-amino-acid chain: Modifier of cell death (901 aa).

Disordered regions lie at residues 147–169 and 218–245; these read AQKR…PRAA and PRKS…SPSP. Residues 259 to 282 form a C2H2-type zinc finger; sequence FKCAECGDGFPVMDRLCDHMIKQH. Disordered regions lie at residues 494-528, 682-717, and 779-901; these read KKEH…DDVP, QERV…SHEE, and HKAI…WDDN. The span at 817–828 shows a compositional bias: low complexity; that stretch reads EAAAKLIQAENE. Residues 829–840 show a composition bias toward acidic residues; it reads MVVEEEEVEEPP. A compositionally biased stretch (basic and acidic residues) spans 846–866; it reads QVPKEKEVEVAEAEKLPEQVK.

In terms of biological role, promotes programmed cell death. Its role in programmed cell death may be in conjunction with cell cycle regulatory factor efl-1 and the synthetic multivulva class B proteins dpl-1 and lin-35, and is independent of the ced-1, ced-8 and ced-9 pathways. The polypeptide is Modifier of cell death (Caenorhabditis elegans).